Reading from the N-terminus, the 879-residue chain is Phosphoenolpyruvate carboxylase (879 aa).

Active-site residues include histidine 138 and lysine 545.

Belongs to the PEPCase type 1 family. It depends on Mg(2+) as a cofactor.

The catalysed reaction is oxaloacetate + phosphate = phosphoenolpyruvate + hydrogencarbonate. Its function is as follows. Forms oxaloacetate, a four-carbon dicarboxylic acid source for the tricarboxylic acid cycle. The polypeptide is Phosphoenolpyruvate carboxylase (Histophilus somni (strain 2336) (Haemophilus somnus)).